Here is a 772-residue protein sequence, read N- to C-terminus: Probable beta-glucosidase M (772 aa).

The first 20 residues, 1–20 (MLTSWGKTGFVLALALGGRA), serve as a signal peptide directing secretion. The N-linked (GlcNAc...) asparagine glycan is linked to Asn259. Asp287 is an active-site residue. Asn315, Asn322, Asn438, Asn523, Asn547, Asn574, and Asn586 each carry an N-linked (GlcNAc...) asparagine glycan.

The protein belongs to the glycosyl hydrolase 3 family.

It is found in the secreted. It catalyses the reaction Hydrolysis of terminal, non-reducing beta-D-glucosyl residues with release of beta-D-glucose.. Its pathway is glycan metabolism; cellulose degradation. Functionally, beta-glucosidases are one of a number of cellulolytic enzymes involved in the degradation of cellulosic biomass. Catalyzes the last step releasing glucose from the inhibitory cellobiose. This chain is Probable beta-glucosidase M (bglM), found in Emericella nidulans (strain FGSC A4 / ATCC 38163 / CBS 112.46 / NRRL 194 / M139) (Aspergillus nidulans).